Consider the following 302-residue polypeptide: MRHLLDFQGWSRTEVESLLDTARVMREVLERPIKKVPALQGFTVATVFFEPSTRTRISFELAARRMSADVVSFAAQTSSLQKGESYKDTLLTLEAMGVDAYVIRADSAGVPHQATRWVKGAVINGGDGRRAHPTQALLDAYTLLEALGTLEGKKVAIVGDILHSRVARSGAELLSLLGAQVFCAGPPSLLPQSLPGAHLTPRLEEALEEADAVMVLRLQKERMEAGLVHLEDYVARYQVTEKRLALAKPQAPLLHPGPMNRDVELEGTLADSARSLVNRQVQNGVAVRMAVLYHLLVGREKA.

Residues Arg-54 and Thr-55 each contribute to the carbamoyl phosphate site. Lys-82 contributes to the L-aspartate binding site. 3 residues coordinate carbamoyl phosphate: Arg-104, His-132, and Gln-135. L-aspartate-binding residues include Arg-165 and Arg-217. Carbamoyl phosphate-binding residues include Gly-257 and Pro-258.

It belongs to the aspartate/ornithine carbamoyltransferase superfamily. ATCase family. In terms of assembly, heterododecamer (2C3:3R2) of six catalytic PyrB chains organized as two trimers (C3), and six regulatory PyrI chains organized as three dimers (R2).

It carries out the reaction carbamoyl phosphate + L-aspartate = N-carbamoyl-L-aspartate + phosphate + H(+). The protein operates within pyrimidine metabolism; UMP biosynthesis via de novo pathway; (S)-dihydroorotate from bicarbonate: step 2/3. Functionally, catalyzes the condensation of carbamoyl phosphate and aspartate to form carbamoyl aspartate and inorganic phosphate, the committed step in the de novo pyrimidine nucleotide biosynthesis pathway. The polypeptide is Aspartate carbamoyltransferase catalytic subunit (Thermus thermophilus (strain ATCC BAA-163 / DSM 7039 / HB27)).